We begin with the raw amino-acid sequence, 315 residues long: Lipoyl synthase (315 aa).

[4Fe-4S] cluster contacts are provided by Cys62, Cys67, Cys73, Cys88, Cys92, Cys95, and Ser302. The Radical SAM core domain occupies 74 to 291; that stretch reads FGKGTATFMI…ETEALAMGFK (218 aa).

It belongs to the radical SAM superfamily. Lipoyl synthase family. It depends on [4Fe-4S] cluster as a cofactor.

Its subcellular location is the cytoplasm. The enzyme catalyses [[Fe-S] cluster scaffold protein carrying a second [4Fe-4S](2+) cluster] + N(6)-octanoyl-L-lysyl-[protein] + 2 oxidized [2Fe-2S]-[ferredoxin] + 2 S-adenosyl-L-methionine + 4 H(+) = [[Fe-S] cluster scaffold protein] + N(6)-[(R)-dihydrolipoyl]-L-lysyl-[protein] + 4 Fe(3+) + 2 hydrogen sulfide + 2 5'-deoxyadenosine + 2 L-methionine + 2 reduced [2Fe-2S]-[ferredoxin]. Its pathway is protein modification; protein lipoylation via endogenous pathway; protein N(6)-(lipoyl)lysine from octanoyl-[acyl-carrier-protein]: step 2/2. Its function is as follows. Catalyzes the radical-mediated insertion of two sulfur atoms into the C-6 and C-8 positions of the octanoyl moiety bound to the lipoyl domains of lipoate-dependent enzymes, thereby converting the octanoylated domains into lipoylated derivatives. This is Lipoyl synthase from Aromatoleum aromaticum (strain DSM 19018 / LMG 30748 / EbN1) (Azoarcus sp. (strain EbN1)).